Reading from the N-terminus, the 667-residue chain is DNA ligase (667 aa).

Residues Asp30–Asp34, Ser79–Leu80, and Glu112 contribute to the NAD(+) site. The active-site N6-AMP-lysine intermediate is the Lys114. Positions 135, 172, 289, and 313 each coordinate NAD(+). Zn(2+)-binding residues include Cys407, Cys410, Cys425, and Cys431. Positions Val590 to Ala667 constitute a BRCT domain.

The protein belongs to the NAD-dependent DNA ligase family. LigA subfamily. The cofactor is Mg(2+). Mn(2+) is required as a cofactor.

The enzyme catalyses NAD(+) + (deoxyribonucleotide)n-3'-hydroxyl + 5'-phospho-(deoxyribonucleotide)m = (deoxyribonucleotide)n+m + AMP + beta-nicotinamide D-nucleotide.. In terms of biological role, DNA ligase that catalyzes the formation of phosphodiester linkages between 5'-phosphoryl and 3'-hydroxyl groups in double-stranded DNA using NAD as a coenzyme and as the energy source for the reaction. It is essential for DNA replication and repair of damaged DNA. This Histophilus somni (strain 2336) (Haemophilus somnus) protein is DNA ligase.